The chain runs to 621 residues: Very-long-chain aldehyde decarbonylase GL1-5 (621 aa).

The next 5 membrane-spanning stretches (helical) occupy residues I99–L119, G126–H146, L186–F206, F224–T244, and M332–V352. In terms of domain architecture, Fatty acid hydroxylase spans V138 to T272.

This sequence belongs to the sterol desaturase family. In terms of assembly, homodimer.

It is found in the endoplasmic reticulum membrane. The enzyme catalyses a long-chain fatty aldehyde + 2 NADPH + O2 + H(+) = a long-chain alkane + formate + 2 NADP(+) + H2O. Its function is as follows. Aldehyde decarbonylase involved in the conversion of aldehydes to alkanes. Core component of a very-long-chain alkane synthesis complex. The sequence is that of Very-long-chain aldehyde decarbonylase GL1-5 from Oryza sativa subsp. indica (Rice).